Here is a 578-residue protein sequence, read N- to C-terminus: Probable lysosomal cobalamin transporter (578 aa).

2 consecutive transmembrane segments (helical) span residues 8–28 (LIWVVYAIAIAVLIAVASVFI) and 46–66 (IFAITTLLATVLLLPVDVALV). Residue Asn-70 is glycosylated (N-linked (GlcNAc...) asparagine). The next 2 membrane-spanning stretches (helical) occupy residues 95–115 (VVYYLLYSLDALLCLLVIPFT) and 145–165 (TITFIAIVIVLFLVGFFVPVA). Asn-168 carries an N-linked (GlcNAc...) asparagine glycan. The next 6 membrane-spanning stretches (helical) occupy residues 188-208 (ALTFALGLLITIGLCLYVLYT), 312-332 (LLGGIILLIIALVIWVSMLLT), 347-367 (GYILGHITVFNPINWVFVQAA), 375-395 (VIFTLLVLLFFCSSVVGIAIV), 419-439 (LTTAMLMLTILALNYSVSMVV), and 506-526 (FFGVIFFWGQFVFLGVYLIVV). The interval 539–578 (RQMDEDAEEAEEEGLLASTGRRLDTAWQDITGRSNRQRDS) is disordered. A compositionally biased stretch (acidic residues) spans 540–552 (QMDEDAEEAEEEG).

This sequence belongs to the LIMR family. LMBRD1 subfamily.

It is found in the lysosome membrane. In terms of biological role, probable lysosomal cobalamin transporter. Required to export cobalamin from lysosomes allowing its conversion to cofactors. The protein is Probable lysosomal cobalamin transporter of Aspergillus terreus (strain NIH 2624 / FGSC A1156).